Reading from the N-terminus, the 179-residue chain is uncharacterized protein (179 aa).

The segment at 1–32 is disordered; that stretch reads MELQGAQEDLGISLSSPRRNHETRPGSKAKGR.

This is an uncharacterized protein from Homo sapiens (Human).